The sequence spans 89 residues: Small ribosomal subunit protein uS15 (89 aa).

The protein belongs to the universal ribosomal protein uS15 family. Part of the 30S ribosomal subunit. Forms a bridge to the 50S subunit in the 70S ribosome, contacting the 23S rRNA.

In terms of biological role, one of the primary rRNA binding proteins, it binds directly to 16S rRNA where it helps nucleate assembly of the platform of the 30S subunit by binding and bridging several RNA helices of the 16S rRNA. Functionally, forms an intersubunit bridge (bridge B4) with the 23S rRNA of the 50S subunit in the ribosome. In Paramagnetospirillum magneticum (strain ATCC 700264 / AMB-1) (Magnetospirillum magneticum), this protein is Small ribosomal subunit protein uS15.